A 445-amino-acid polypeptide reads, in one-letter code: Trigger factor (445 aa).

A PPIase FKBP-type domain is found at 163–248 (GDTVVIDYVG…IHEVKVKELP (86 aa)). The disordered stretch occupies residues 425–445 (KEVESAKDDADKEASDAKADK).

Belongs to the FKBP-type PPIase family. Tig subfamily.

It localises to the cytoplasm. It catalyses the reaction [protein]-peptidylproline (omega=180) = [protein]-peptidylproline (omega=0). Its function is as follows. Involved in protein export. Acts as a chaperone by maintaining the newly synthesized protein in an open conformation. Functions as a peptidyl-prolyl cis-trans isomerase. The sequence is that of Trigger factor from Lacticaseibacillus casei (strain BL23) (Lactobacillus casei).